Consider the following 530-residue polypeptide: Developmental and secondary metabolism regulator VEL1 (530 aa).

The Velvet domain occupies 26 to 220; sequence NRSLWYQMTV…ADQGCQVRIR (195 aa). The Nuclear localization signal signature appears at 40-45; that stretch reads ERARAC. Residues 206-516 are disordered; the sequence is LSKTVADQGC…HDQGWYSRAD (311 aa). Positions 244–253 are enriched in basic and acidic residues; the sequence is FERREEDFGR. Residues 295 to 305 show a composition bias toward pro residues; that stretch reads YPPPPPPPSYE. Residues 347-356 show a composition bias toward polar residues; it reads YAPTAQSPYS. Residues 380 to 389 are compositionally biased toward basic and acidic residues; it reads VKHDLYDRRQ. Over residues 390 to 404 the composition is skewed to low complexity; it reads STSSYVPPSPSVYST. Over residues 415 to 426 the composition is skewed to pro residues; that stretch reads SYPPTPVAAPRP. The segment at 429–460 is PEST; sequence MHSQTSLPALKIDQLVSPVSPLPPIEPQTGPA. Positions 478–490 are enriched in polar residues; it reads FAQSTRPLHNGQR.

This sequence belongs to the velvet family. VeA subfamily. As to quaternary structure, component of the heterotrimeric velvet complex composed of LAE1, VEL1 and VEL2; VEL1 acting as a bridging protein between LAE1 and VEL2. Interacts with LAE1.

It localises to the nucleus. The protein resides in the cytoplasm. Its function is as follows. Component of the velvet transcription factor complex that controls sexual/asexual developmental ratio in response to light, promoting sexual development in the darkness while stimulating asexual sporulation under illumination. The velvet complex hat acts as a global regulator for secondary metabolite gene expression. Controls positively the expression of the gibberellins, fumonisins and fusarin C gene clusters. Controls the expression of the fusaric acid gene cluster. Controls negatively the expression of the bikaverin gene cluster. Regulates the expression of laeA. Plays a crucial role in virulence. In Gibberella fujikuroi (strain CBS 195.34 / IMI 58289 / NRRL A-6831) (Bakanae and foot rot disease fungus), this protein is Developmental and secondary metabolism regulator VEL1.